Consider the following 87-residue polypeptide: U15-lycotoxin-Ls1f (87 aa).

Positions 1–20 (MNSKIFAVLLLLAFLSCVLS) are cleaved as a signal peptide. Residues 21-66 (DQYCPKSSITACKKMNIRNDCCKDDDCTGGSWCCATPCGNFCKYPT) enclose the WAP domain. Cystine bridges form between cysteine 24–cysteine 54, cysteine 32–cysteine 58, cysteine 41–cysteine 53, cysteine 42–cysteine 80, and cysteine 47–cysteine 62.

Belongs to the venom protein 11 family. 01 (wap-1) subfamily. Post-translationally, contains 5 disulfide bonds. In terms of tissue distribution, expressed by the venom gland.

It is found in the secreted. Functionally, has antibacterial activity. This chain is U15-lycotoxin-Ls1f, found in Lycosa singoriensis (Wolf spider).